A 497-amino-acid chain; its full sequence is Endoglucanase 17 (497 aa).

Positions 1–21 (MAAAGGAVLLLVLATATSVTG) are cleaved as a signal peptide. Asp-77 acts as the Nucleophile in catalysis. His-406 is a catalytic residue. N-linked (GlcNAc...) asparagine glycosylation occurs at Asn-451. Catalysis depends on residues Asp-458 and Glu-467.

The protein belongs to the glycosyl hydrolase 9 (cellulase E) family.

It localises to the secreted. It catalyses the reaction Endohydrolysis of (1-&gt;4)-beta-D-glucosidic linkages in cellulose, lichenin and cereal beta-D-glucans.. The polypeptide is Endoglucanase 17 (GLU13) (Oryza sativa subsp. japonica (Rice)).